The chain runs to 313 residues: Cytochrome c biogenesis protein CcsA (313 aa).

Helical transmembrane passes span 9–29, 44–64, 71–91, 111–131, 143–163, 217–237, 244–264, and 278–298; these read ILTH…LITF, GIIV…ISSG, LYES…IPYF, GFAT…VPAL, MILG…LLVI, VISL…VWAN, WNWD…AIYL, and AIVA…VNLL.

Belongs to the CcmF/CycK/Ccl1/NrfE/CcsA family. As to quaternary structure, may interact with Ccs1.

Its subcellular location is the plastid. The protein resides in the chloroplast thylakoid membrane. Required during biogenesis of c-type cytochromes (cytochrome c6 and cytochrome f) at the step of heme attachment. This Solanum bulbocastanum (Wild potato) protein is Cytochrome c biogenesis protein CcsA.